The sequence spans 317 residues: Metaxin-1 (317 aa).

Residues K38, K41, and K78 each participate in a glycyl lysine isopeptide (Lys-Gly) (interchain with G-Cter in ubiquitin) cross-link. A helical transmembrane segment spans residues 164–184 (EELEKELYQEARECLTLLSQR).

The protein belongs to the metaxin family. Interacts with MTX2/metaxin-2. Associates with the mitochondrial contact site and cristae organizing system (MICOS) complex, composed of at least MICOS10/MIC10, CHCHD3/MIC19, CHCHD6/MIC25, APOOL/MIC27, IMMT/MIC60, APOO/MIC23/MIC26 and QIL1/MIC13. This complex was also known under the names MINOS or MitOS complex. The MICOS complex associates with mitochondrial outer membrane proteins SAMM50, MTX1 and MTX2 (together described as components of the mitochondrial outer membrane sorting assembly machinery (SAM) complex) and DNAJC11, mitochondrial inner membrane protein TMEM11 and with HSPA9. The MICOS and SAM complexes together with DNAJC11 are part of a large protein complex spanning both membranes termed the mitochondrial intermembrane space bridging (MIB) complex. Interacts with ARMC1. Ubiquitinated by PRKN during mitophagy, leading to its degradation and enhancement of mitophagy. Deubiquitinated by USP30.

The protein localises to the mitochondrion outer membrane. Its function is as follows. Involved in transport of proteins into the mitochondrion. Essential for embryonic development. This Sus scrofa (Pig) protein is Metaxin-1 (MTX1).